The primary structure comprises 263 residues: Lens fiber major intrinsic protein (263 aa).

Residues 1–9 (MWELRSASF) are Cytoplasmic-facing. A helical transmembrane segment spans residues 10–29 (WRAIFAEFFATLFYVFFGLG). Topologically, residues 30–41 (SSLRWAPGPLHV) are extracellular. The chain crosses the membrane as a helical span at residues 42 to 59 (LQVALAFGLALATLVQTV). Over 60 to 61 (GH) the chain is Cytoplasmic. An intramembrane region (discontinuously helical) is located at residues 62–77 (ISGAHVNPAVTFAFLV). Positions 68–70 (NPA) match the NPA 1 motif. The Cytoplasmic segment spans residues 78–82 (GSQMS). The helical transmembrane segment at 83–106 (LLRAFCYIAAQLLGAVAGAAVLYS) threads the bilayer. Residues 107–127 (VTPPAVRGNLALNTLHAGVSV) lie on the Extracellular side of the membrane. A helical membrane pass occupies residues 128–148 (GQATTVEIFLTLQFVLCIFAT). Topologically, residues 149–156 (YDERRNGR) are cytoplasmic. The helical transmembrane segment at 157–175 (MGSVALAVGFSLTLGHLFG) threads the bilayer. Residues 176-178 (MYY) lie on the Extracellular side of the membrane. The segment at residues 179-193 (TGAGMNPARSFAPAI) is an intramembrane region (discontinuously helical). The NPA 2 signature appears at 184-186 (NPA). The Extracellular portion of the chain corresponds to 194–200 (LTRNFSN). The chain crosses the membrane as a helical span at residues 201-222 (HWVYWVGPIIGGGLGSLLYDFL). Topologically, residues 223-263 (LFPRLKSVSERLSILKGARPSDSNGQPEGTGEPVELKTQAL) are cytoplasmic. The interval 227–237 (LKSVSERLSIL) is interaction with CALM. Residues serine 235, serine 243, and serine 245 each carry the phosphoserine modification. Residues 240-263 (ARPSDSNGQPEGTGEPVELKTQAL) are disordered. Asparagine 246 is subject to Deamidated asparagine.

The protein belongs to the MIP/aquaporin (TC 1.A.8) family. Homotetramer; each monomer provides an independent water pore. Two homotetramers on opposing membranes can dimerize, forming a cell-cell junction. Interacts with CALM; the calcium-calmodulin/CALM complex interacts with the cytoplasmic domains of two aquaporins, leading to channel closure. Interacts with BFSP1 (via C-terminus); prevents calcium-dependent inhibition of the water channel activity. Subject to partial proteolytic cleavage in the eye lens core. Partial proteolysis promotes interactions between tetramers from adjoining membranes. In terms of processing, fatty acylated at Met-1 and Lys-238. The acyl modifications, in decreasing order of ion abundance, are: oleoyl (C18:1) &gt; palmitoyl (C16:0) &gt; stearoyl (C18:0) &gt; eicosenoyl (C20:1) &gt; dihomo-gamma-linolenoyl (C20:3) &gt; palmitoleoyl (C16:1) &gt; eicosadienoyl (C20:2).

The protein localises to the cell membrane. It localises to the cell junction. The catalysed reaction is H2O(in) = H2O(out). Its activity is regulated as follows. The water channel activity is inhibited by calcium through calmodulin/CALM. Aquaporins form homotetrameric transmembrane channels, with each monomer independently mediating water transport across the plasma membrane along its osmotic gradient. Specifically expressed in lens fiber cells, this aquaporin is crucial for maintaining lens water homeostasis and transparency. Beyond water permeability, it also acts as a cell-to-cell adhesion molecule, forming thin junctions between lens fiber cells that are essential for maintaining the ordered structure and transparency of the lens. The sequence is that of Lens fiber major intrinsic protein from Rattus norvegicus (Rat).